The chain runs to 327 residues: Phenylalanine--tRNA ligase alpha subunit (327 aa).

Glu252 contacts Mg(2+).

This sequence belongs to the class-II aminoacyl-tRNA synthetase family. Phe-tRNA synthetase alpha subunit type 1 subfamily. In terms of assembly, tetramer of two alpha and two beta subunits. Mg(2+) serves as cofactor.

It is found in the cytoplasm. The enzyme catalyses tRNA(Phe) + L-phenylalanine + ATP = L-phenylalanyl-tRNA(Phe) + AMP + diphosphate + H(+). This is Phenylalanine--tRNA ligase alpha subunit from Photorhabdus laumondii subsp. laumondii (strain DSM 15139 / CIP 105565 / TT01) (Photorhabdus luminescens subsp. laumondii).